Reading from the N-terminus, the 159-residue chain is ATP synthase subunit b (159 aa).

A helical transmembrane segment spans residues 8–28 (ILATIINFIILILILKHFFWD).

This sequence belongs to the ATPase B chain family. As to quaternary structure, F-type ATPases have 2 components, F(1) - the catalytic core - and F(0) - the membrane proton channel. F(1) has five subunits: alpha(3), beta(3), gamma(1), delta(1), epsilon(1). F(0) has three main subunits: a(1), b(2) and c(10-14). The alpha and beta chains form an alternating ring which encloses part of the gamma chain. F(1) is attached to F(0) by a central stalk formed by the gamma and epsilon chains, while a peripheral stalk is formed by the delta and b chains.

Its subcellular location is the cell membrane. In terms of biological role, f(1)F(0) ATP synthase produces ATP from ADP in the presence of a proton or sodium gradient. F-type ATPases consist of two structural domains, F(1) containing the extramembraneous catalytic core and F(0) containing the membrane proton channel, linked together by a central stalk and a peripheral stalk. During catalysis, ATP synthesis in the catalytic domain of F(1) is coupled via a rotary mechanism of the central stalk subunits to proton translocation. Functionally, component of the F(0) channel, it forms part of the peripheral stalk, linking F(1) to F(0). This is ATP synthase subunit b from Clostridium perfringens (strain ATCC 13124 / DSM 756 / JCM 1290 / NCIMB 6125 / NCTC 8237 / Type A).